The sequence spans 150 residues: uncharacterized protein (150 aa).

In terms of domain architecture, HTH asnC-type spans 5 to 66; sequence LDKVDRRLLE…KPNYKKLNLG (62 aa). The H-T-H motif DNA-binding region spans 24–43; it reads IATLSKKLGIPRTTVHYRIK.

This is an uncharacterized protein from Pyrococcus horikoshii (strain ATCC 700860 / DSM 12428 / JCM 9974 / NBRC 100139 / OT-3).